Here is a 152-residue protein sequence, read N- to C-terminus: Deoxyuridine 5'-triphosphate nucleotidohydrolase (152 aa).

Residues 71-73 (RSG), Asn-84, 88-90 (LID), and Met-98 each bind substrate.

Belongs to the dUTPase family. Mg(2+) serves as cofactor.

The catalysed reaction is dUTP + H2O = dUMP + diphosphate + H(+). It functions in the pathway pyrimidine metabolism; dUMP biosynthesis; dUMP from dCTP (dUTP route): step 2/2. This enzyme is involved in nucleotide metabolism: it produces dUMP, the immediate precursor of thymidine nucleotides and it decreases the intracellular concentration of dUTP so that uracil cannot be incorporated into DNA. This is Deoxyuridine 5'-triphosphate nucleotidohydrolase from Shewanella piezotolerans (strain WP3 / JCM 13877).